Consider the following 53-residue polypeptide: MQKWVCVPCGYEYDPADGDPENGIEPGTAFEDLPEDWVCPVCGVDKSFFEPVS.

Positions 1–53 (MQKWVCVPCGYEYDPADGDPENGIEPGTAFEDLPEDWVCPVCGVDKSFFEPVS) constitute a Rubredoxin-like domain. Cysteine 6, cysteine 9, cysteine 39, and cysteine 42 together coordinate Fe cation.

The protein belongs to the rubredoxin family. In terms of assembly, monomer. The cofactor is Fe(3+).

Its function is as follows. Functions as an electron acceptor for pyruvate ferredoxin oxidoreductase (PFOR). The protein is Rubredoxin 3 (rub3) of Chlorobaculum tepidum (strain ATCC 49652 / DSM 12025 / NBRC 103806 / TLS) (Chlorobium tepidum).